We begin with the raw amino-acid sequence, 393 residues long: Demethylspheroidene O-methyltransferase (393 aa).

Residues 1–36 (MPKDDHTGATADRTAQPTGTGKQPLVPGQPGAAPVQ) are disordered. Residues 26-36 (VPGQPGAAPVQ) are compositionally biased toward low complexity. The S-adenosyl-L-methionine site is built by D259 and R297.

Belongs to the class I-like SAM-binding methyltransferase superfamily. Cation-independent O-methyltransferase family.

The catalysed reaction is demethylspheroidene + S-adenosyl-L-methionine = spheroidene + S-adenosyl-L-homocysteine + H(+). It functions in the pathway carotenoid biosynthesis; spheroidene biosynthesis. Its function is as follows. Methyltransferase that mediates the O-methylation of 1-hydroxy carotenoids. Converts hydroxyneurosporene to methoxyneurosporene or demethylspheroidene to spheroidene. Also able to produce spirilloxanthin. The sequence is that of Demethylspheroidene O-methyltransferase (crtF) from Rhodobacter capsulatus (strain ATCC BAA-309 / NBRC 16581 / SB1003).